Reading from the N-terminus, the 327-residue chain is Gonadotropin-releasing hormone receptor (327 aa).

Residues 1 to 37 (MASASPEQNQNHCSAVNNSNMLMQGNLPTLTLSGKIR) are Extracellular-facing. An N-linked (GlcNAc...) asparagine glycan is attached at N17. The helical transmembrane segment at 38-57 (VTVTFFLFLLSTIFNASFLL) threads the bilayer. At 58-76 (KLQKWTQKKEKGKKLSRMK) the chain is on the cytoplasmic side. A helical membrane pass occupies residues 77-96 (VLLKHLTLANLLETLIVMPL). Topologically, residues 97–114 (DGMWNITVQWYAGEFLCK) are extracellular. A glycan (N-linked (GlcNAc...) asparagine) is linked at N101. C113 and C195 are disulfide-bonded. A helical transmembrane segment spans residues 115–136 (VLSYLKLFSMYAPAFMMVVISL). The Cytoplasmic segment spans residues 137–163 (DRSLAITRPLAMKNNGKLGQSMIGLAW). A helical transmembrane segment spans residues 164 to 183 (LLSGIFAGPQLYIFRMIHLA). Residues 184-211 (DSSGQTEGFPQCVTHCSFPQWWHQAFYN) lie on the Extracellular side of the membrane. A helical transmembrane segment spans residues 212 to 231 (FFTFSCLFIIPLFITLICNA). At 232–280 (KIIFTLTRVLHQDPHELQLNQSKNNIPRARLRTLKMTVAFATSFTVCWT) the chain is on the cytoplasmic side. A helical transmembrane segment spans residues 281–299 (PYYVLGIWYWFDPEMLNRV). The Extracellular portion of the chain corresponds to 300-305 (SDPVNH). The helical transmembrane segment at 306 to 325 (FFFLFALLNPCFDPLIYGYF) threads the bilayer. The Cytoplasmic portion of the chain corresponds to 326–327 (SL).

It belongs to the G-protein coupled receptor 1 family.

It localises to the cell membrane. Functionally, receptor for gonadotropin releasing hormone (GnRH) that mediates the action of GnRH to stimulate the secretion of the gonadotropic hormones luteinizing hormone (LH) and follicle-stimulating hormone (FSH). This receptor mediates its action by association with G-proteins that activate a phosphatidylinositol-calcium second messenger system. The sequence is that of Gonadotropin-releasing hormone receptor (GNRHR) from Canis lupus familiaris (Dog).